The chain runs to 162 residues: MARVEL domain-containing protein 1 (162 aa).

The Cytoplasmic portion of the chain corresponds to 1 to 17; sequence MPTQPQEKRSFLQFLKS. Residues 14 to 155 form the MARVEL domain; sequence FLKSFVGIVR…SGIYCSCRKC (142 aa). A helical membrane pass occupies residues 18-38; sequence FVGIVRVLQILLGAGLWVTIA. Topologically, residues 39-47 are extracellular; sequence ANKYEGSIH. Residues 48 to 68 traverse the membrane as a helical segment; that stretch reads FVLFVAVLFWLLTLAIFILTL. The Cytoplasmic segment spans residues 69–86; the sequence is LDKQDLVPIVGGERWLLS. Residues 87–107 traverse the membrane as a helical segment; sequence NLIHDVVATLLYLSTIGIMIY. Residues 108–127 are Extracellular-facing; the sequence is KTQKNSYCNLDVYKHHCLYK. The chain crosses the membrane as a helical span at residues 128–148; it reads VYLTASVFACLTAAVYLLSGI. At 149–162 the chain is on the cytoplasmic side; the sequence is YCSCRKCRGERTVV.

It is found in the membrane. It localises to the nucleus. The protein is MARVEL domain-containing protein 1 (marveld1) of Danio rerio (Zebrafish).